We begin with the raw amino-acid sequence, 1101 residues long: MEPPAAKRSRGCPAGDEPGTGARRSRPEPLLDLSAKRVAESWAFEQVEERFSRVPEPVQKRIVFWSFPRSEREICMYSSLGYQPPEGEQDTRVPFTRGLHLLQSGAVDRVLQVGFHLSGNIREVGGPGEPEHLYHVSISFDRCKITSVSCGCDNRDLFYCAHVVALSLYRIRHARQVELRLPISETLSQMNRDQLQKFVQYLISAHHTEVLPTAQRLADEILLLGSEINLVHGAPDPTAGAGTEDANCWHLDEEQIQEQVKQLLSNGGHYGASQQLRSMFSKVREMLRARDSNGARMLILMTEQFLQDPRLALWRQQGAGMTDKCRQLWDELGALWVCVILSPHCKPDERSGWLQLLGTWDKLDVCPLEEGNYSLDIPSLQPALTSRTGSEDEEEVTAASPRRTVFSRALQAGELHWNDSHLQRILASDSCGPTLTGSMGSDKPTFDPQGHPIWLGEPFPTACARVDTLRAHGYPHKALRLACAIINTLRLQRRHQLESYKQQKKELLQKGATGVTSTEGWVGHPLDPIGCLCRALLEACRLEEEPHSLFPDSAPEKRKLAYQHVLVPGSPGESYLALALEVALLGLGQQRALPEGLYAQDKVVRNEEQLLALLEEVELDERLVQVLRKQAGLLLEGGPFSGFGEVIFRESVPMHTCARYLFTALLPHDPDLAFRLALRAMRLPVLETTFPAGESHPNPLDSIMSNRFPRWFILGHLETRQCELASTMLTAAKGDTKWLHAVLGSVQQNIHSPALLFKLAQDACKTATPASAPPDTVLLGIALELGLQVMRMTLNTMTWRRREMVRWLVSCATEIGPPALMSIMKNWYSLFTPVEAVTIVAVTGTTHATLLRLQLDTAGREELWACARTLALQCAMKDPQNCALPALTLCEKNHAAFEAAYQIVLDAAAGGLGHAHLFTVARYMEHRGLPLRAYKLATLALAQLSIAFNQDSHPAVNDVLWACSLSHSLGRHELSAIVPLIIRSIHCAPMLSDILRRWTLSAPGLGPLGARRATKPLGTDRAPLCQLLDAAVAAYITTSHSRLTHISPRHYGDFIEFLGKARETFLLAPDGHLQFAQFLENLKQTYKGKKKLMLLVRERFG.

Residues Met-1–Pro-29 form a disordered region. The SWIM-type zinc finger occupies Tyr-134 to Ile-171.

The chain is Zinc finger SWIM domain-containing protein 4 (Zswim4) from Mus musculus (Mouse).